The chain runs to 412 residues: CHRNA7-FAM7A fusion protein (412 aa).

5 helical membrane passes run 144–164, 172–192, 205–225, 240–254, and 380–400; these read GLNLLIPCVLISALALLVFLL, ISLGITVLLSLTVFMLLVAEI, QYFASTMIIVGLSVVVTVIVL, WTRVILLNWCAWFLR, and LCLMAFSVFTIICTIGILMSA.

This sequence belongs to the ligand-gated ion channel (TC 1.A.9) family. In terms of tissue distribution, expressed in hippocampus.

The protein resides in the membrane. The sequence is that of CHRNA7-FAM7A fusion protein (CHRFAM7A) from Homo sapiens (Human).